Reading from the N-terminus, the 213-residue chain is Thiamine-phosphate synthase (213 aa).

4-amino-2-methyl-5-(diphosphooxymethyl)pyrimidine contacts are provided by residues 42 to 46 (QYREK) and Asp-77. Positions 78 and 97 each coordinate Mg(2+). 4-amino-2-methyl-5-(diphosphooxymethyl)pyrimidine is bound at residue Ser-116. 142–144 (TIS) lines the 2-[(2R,5Z)-2-carboxy-4-methylthiazol-5(2H)-ylidene]ethyl phosphate pocket. Lys-145 is a binding site for 4-amino-2-methyl-5-(diphosphooxymethyl)pyrimidine. 2-[(2R,5Z)-2-carboxy-4-methylthiazol-5(2H)-ylidene]ethyl phosphate is bound by residues Gly-173 and 193 to 194 (IS).

It belongs to the thiamine-phosphate synthase family. The cofactor is Mg(2+).

It catalyses the reaction 2-[(2R,5Z)-2-carboxy-4-methylthiazol-5(2H)-ylidene]ethyl phosphate + 4-amino-2-methyl-5-(diphosphooxymethyl)pyrimidine + 2 H(+) = thiamine phosphate + CO2 + diphosphate. It carries out the reaction 2-(2-carboxy-4-methylthiazol-5-yl)ethyl phosphate + 4-amino-2-methyl-5-(diphosphooxymethyl)pyrimidine + 2 H(+) = thiamine phosphate + CO2 + diphosphate. The catalysed reaction is 4-methyl-5-(2-phosphooxyethyl)-thiazole + 4-amino-2-methyl-5-(diphosphooxymethyl)pyrimidine + H(+) = thiamine phosphate + diphosphate. It participates in cofactor biosynthesis; thiamine diphosphate biosynthesis; thiamine phosphate from 4-amino-2-methyl-5-diphosphomethylpyrimidine and 4-methyl-5-(2-phosphoethyl)-thiazole: step 1/1. In terms of biological role, condenses 4-methyl-5-(beta-hydroxyethyl)thiazole monophosphate (THZ-P) and 2-methyl-4-amino-5-hydroxymethyl pyrimidine pyrophosphate (HMP-PP) to form thiamine monophosphate (TMP). The chain is Thiamine-phosphate synthase from Limosilactobacillus fermentum (strain NBRC 3956 / LMG 18251) (Lactobacillus fermentum).